The chain runs to 205 residues: High frequency lysogenization protein HflD homolog (205 aa).

The protein belongs to the HflD family.

The protein resides in the cytoplasm. It localises to the cell inner membrane. This is High frequency lysogenization protein HflD homolog from Shewanella baltica (strain OS223).